The following is a 255-amino-acid chain: FMR1 neighbor protein (255 aa).

The Cytoplasmic portion of the chain corresponds to 1 to 68; that stretch reads MSSHRRKAKG…ESLKMRVSKP (68 aa). A helical transmembrane segment spans residues 69–89; the sequence is FGMLMLSIWILLFVCYYLSYY. Residues 90 to 183 are Extracellular-facing; sequence LCSGSSYFVL…FAPFRDVPKQ (94 aa). Residues 125 to 184 form the P-type domain; sequence LLNFFFPTTCNLRENQVAKPCNELQDLSESECLRHKCCFSSSGTTSFKCFAPFRDVPKQM. The helical transmembrane segment at 184–204 threads the bilayer; the sequence is MMQMFGLGAISLILVCLPIYC. Residues 205 to 255 lie on the Cytoplasmic side of the membrane; it reads RSLFWRSEPADDLQRQDNRVVTGLKKQRRKRKRKSEMLQKAARGREEHGDE. Residues 220–255 form a disordered region; sequence QDNRVVTGLKKQRRKRKRKSEMLQKAARGREEHGDE. Residues 229–238 show a composition bias toward basic residues; the sequence is KKQRRKRKRK.

In terms of tissue distribution, testis-specific. Expressed in melanoma, sarcoma, lung, breast, bladder, esophageal and ovarian cancers.

The protein localises to the membrane. This chain is FMR1 neighbor protein, found in Homo sapiens (Human).